The sequence spans 357 residues: sn-glycerol-3-phosphate import ATP-binding protein UgpC (357 aa).

The ABC transporter domain maps to 4 to 235 (LKLQAVTKSY…PASLFVASFI (232 aa)). Residue 37–44 (GPSGCGKS) participates in ATP binding.

This sequence belongs to the ABC transporter superfamily. sn-glycerol-3-phosphate importer (TC 3.A.1.1.3) family. As to quaternary structure, the complex is composed of two ATP-binding proteins (UgpC), two transmembrane proteins (UgpA and UgpE) and a solute-binding protein (UgpB).

It is found in the cell inner membrane. It catalyses the reaction sn-glycerol 3-phosphate(out) + ATP + H2O = sn-glycerol 3-phosphate(in) + ADP + phosphate + H(+). Its function is as follows. Part of the ABC transporter complex UgpBAEC involved in sn-glycerol-3-phosphate (G3P) import. Responsible for energy coupling to the transport system. The sequence is that of sn-glycerol-3-phosphate import ATP-binding protein UgpC from Pectobacterium atrosepticum (strain SCRI 1043 / ATCC BAA-672) (Erwinia carotovora subsp. atroseptica).